The sequence spans 373 residues: Spore coat polysaccharide biosynthesis protein SpsE (373 aa).

Residues 305–367 (GIFTTAPIQK…GIVWDDILLK (63 aa)) enclose the AFP-like domain.

It functions in the pathway spore coat biogenesis; spore coat polysaccharide biosynthesis. The protein is Spore coat polysaccharide biosynthesis protein SpsE (spsE) of Bacillus subtilis (strain 168).